Reading from the N-terminus, the 473-residue chain is Sorting nexin-17 (473 aa).

Positions 1–108 (MHFSIPETEV…SFLRKAQQET (108 aa)) constitute a PX domain. Residues arginine 35, serine 37, lysine 61, and arginine 74 each coordinate a 1,2-diacyl-sn-glycero-3-phospho-(1D-myo-inositol-3-phosphate). A Ras-associating domain is found at 114 to 205 (EEVQLEIYLS…YRIILRKSYW (92 aa)). Residues 114 to 433 (EEVQLEIYLS…DPNREQVVKL (320 aa)) form an FERM-like region. Residues 269-433 (GYIKFDPCIT…DPNREQVVKL (165 aa)) are PTB-like F3 module. Positions 391 to 431 (SIKKQMQKKRLNGSLQRSDSQQAVKSPPILDSPDPNREQVV) are disordered. Residues 403 to 414 (GSLQRSDSQQAV) are compositionally biased toward polar residues.

The protein belongs to the sorting nexin family. Monomer. Interacts with CCDC22, CCDC93, DSCR3 and VPS35L; the interaction with DSCR3 is direct and associates SNX17 with the retriever and CCC complexes.

The protein resides in the cytoplasm. It is found in the early endosome. It localises to the cytoplasmic vesicle membrane. In terms of biological role, critical regulator of endosomal recycling of numerous surface proteins, including integrins, signaling receptor and channels. Binds to NPxY sequences in the cytoplasmic tails of target cargos. Associates with retriever and CCC complexes to prevent lysosomal degradation and promote cell surface recycling of numerous cargos such as integrins ITGB1, ITGB5 and their associated alpha subunits. Also required for maintenance of normal cell surface levels of APP and LRP1. Interacts with membranes containing phosphatidylinositol 3-phosphate (PtdIns(3P)). This is Sorting nexin-17 (snx17) from Danio rerio (Zebrafish).